The primary structure comprises 481 residues: 3-isopropylmalate dehydratase large subunit (481 aa).

[4Fe-4S] cluster-binding residues include Cys363, Cys423, and Cys426. Residues 432–459 (DQLKPGERSASTSNRNFEGRQGPGGRTH) form a disordered region.

Belongs to the aconitase/IPM isomerase family. LeuC type 1 subfamily. Heterodimer of LeuC and LeuD. [4Fe-4S] cluster serves as cofactor.

It catalyses the reaction (2R,3S)-3-isopropylmalate = (2S)-2-isopropylmalate. It participates in amino-acid biosynthesis; L-leucine biosynthesis; L-leucine from 3-methyl-2-oxobutanoate: step 2/4. Catalyzes the isomerization between 2-isopropylmalate and 3-isopropylmalate, via the formation of 2-isopropylmaleate. This is 3-isopropylmalate dehydratase large subunit from Corynebacterium glutamicum (strain ATCC 13032 / DSM 20300 / JCM 1318 / BCRC 11384 / CCUG 27702 / LMG 3730 / NBRC 12168 / NCIMB 10025 / NRRL B-2784 / 534).